We begin with the raw amino-acid sequence, 240 residues long: Homeobox-leucine zipper protein HOX14 (240 aa).

A disordered region spans residues 26–64; sequence SGEVQGERPRARRRRRRGARCVGGGGGGGEVDGGDPKKR. Over residues 35 to 44 the composition is skewed to basic residues; sequence RARRRRRRGA. The segment covering 46 to 56 has biased composition (gly residues); it reads CVGGGGGGGEV. Residues 59 to 118 constitute a DNA-binding region (homeobox); the sequence is GDPKKRRLSDEQVEMLELSFREERKLETGRKVHLASELGLDPKQVAVWFQNRRARHKSKL. A coiled-coil region spans residues 108–167; the sequence is QNRRARHKSKLLEEEFSKLKHAHDAAILHKCHLENEVLRLKERLVVAEEEVRRLRSAAGS.

This sequence belongs to the HD-ZIP homeobox family. Class I subfamily. As to expression, expressed in roots, stems, leaf blades and panicles.

The protein resides in the nucleus. Probable transcription factor. In Oryza sativa subsp. japonica (Rice), this protein is Homeobox-leucine zipper protein HOX14 (HOX14).